Consider the following 233-residue polypeptide: Large ribosomal subunit protein uL1 (233 aa).

This sequence belongs to the universal ribosomal protein uL1 family. As to quaternary structure, part of the 50S ribosomal subunit.

Its function is as follows. Binds directly to 23S rRNA. The L1 stalk is quite mobile in the ribosome, and is involved in E site tRNA release. Protein L1 is also a translational repressor protein, it controls the translation of the L11 operon by binding to its mRNA. In Brucella anthropi (strain ATCC 49188 / DSM 6882 / CCUG 24695 / JCM 21032 / LMG 3331 / NBRC 15819 / NCTC 12168 / Alc 37) (Ochrobactrum anthropi), this protein is Large ribosomal subunit protein uL1.